We begin with the raw amino-acid sequence, 236 residues long: Ubiquinone biosynthesis O-methyltransferase (236 aa).

4 residues coordinate S-adenosyl-L-methionine: R39, G59, D80, and M124.

Belongs to the methyltransferase superfamily. UbiG/COQ3 family.

It catalyses the reaction a 3-demethylubiquinol + S-adenosyl-L-methionine = a ubiquinol + S-adenosyl-L-homocysteine + H(+). The enzyme catalyses a 3-(all-trans-polyprenyl)benzene-1,2-diol + S-adenosyl-L-methionine = a 2-methoxy-6-(all-trans-polyprenyl)phenol + S-adenosyl-L-homocysteine + H(+). It functions in the pathway cofactor biosynthesis; ubiquinone biosynthesis. Its function is as follows. O-methyltransferase that catalyzes the 2 O-methylation steps in the ubiquinone biosynthetic pathway. The sequence is that of Ubiquinone biosynthesis O-methyltransferase from Shewanella sp. (strain W3-18-1).